Consider the following 444-residue polypeptide: Glutamate--methylamine ligase (444 aa).

Residues His14–Lys97 form the GS beta-grasp domain. In terms of domain architecture, GS catalytic spans Thr103 to Tyr444.

Belongs to the glutamine synthetase family. Type 3 subfamily. It depends on Mg(2+) as a cofactor.

It catalyses the reaction methylamine + L-glutamate + ATP = N(5)-methyl-L-glutamine + ADP + phosphate + H(+). The catalysed reaction is ethylamine + L-glutamate + ATP = N(5)-ethyl-L-glutamine + ADP + phosphate + H(+). Formation of theanine is repressed by a high concentration of glutamic acid. Catalyzes the formation of N(5)-methyl-L-glutamine from glutamate and methylamine. In vitro, can also use ethylamine, hydroxylamine and ammonia, with 75%, 40% and 1% activity compared to methylamine, respectively. The sequence is that of Glutamate--methylamine ligase from Methylovorus mays.